Consider the following 315-residue polypeptide: Small ribosomal subunit protein uS2 (315 aa).

Residues 250 to 315 form a disordered region; the sequence is LLEQGDAAKA…TESEKAPVSE (66 aa). Basic and acidic residues-rich tracts occupy residues 272–282 and 297–315; these read VSAKNEAKSED and TEAKIEAEATESEKAPVSE.

The protein belongs to the universal ribosomal protein uS2 family.

This Clavibacter michiganensis subsp. michiganensis (strain NCPPB 382) protein is Small ribosomal subunit protein uS2.